Consider the following 296-residue polypeptide: GTPase Era (296 aa).

The region spanning 7–174 is the Era-type G domain; that stretch reads RTGFVAIVGR…LEEIAQRLPE (168 aa). The G1 stretch occupies residues 15–22; sequence GRPNVGKS. 15-22 serves as a coordination point for GTP; it reads GRPNVGKS. Positions 41–45 are G2; the sequence is QTTRH. The tract at residues 62–65 is G3; that stretch reads DTPG. GTP is bound by residues 62-66 and 123-126; these read DTPGF and SKID. Residues 123–126 are G4; the sequence is SKID. Residues 153–155 form a G5 region; sequence VSA. A KH type-2 domain is found at 197 to 281; the sequence is VREKIFRLVG…HLEVYIKVRK (85 aa).

The protein belongs to the TRAFAC class TrmE-Era-EngA-EngB-Septin-like GTPase superfamily. Era GTPase family. In terms of assembly, monomer.

It localises to the cytoplasm. The protein resides in the cell inner membrane. In terms of biological role, an essential GTPase that binds both GDP and GTP, with rapid nucleotide exchange. Plays a role in 16S rRNA processing and 30S ribosomal subunit biogenesis and possibly also in cell cycle regulation and energy metabolism. This chain is GTPase Era, found in Bordetella avium (strain 197N).